Here is a 2149-residue protein sequence, read N- to C-terminus: Polyketide synthase 1 (2149 aa).

Positions 19 to 261 (FIFGDQSSCN…TRLAVHAPYH (243 aa)) are N-terminal acylcarrier protein transacylase domain (SAT). In terms of domain architecture, Ketosynthase family 3 (KS3) spans 394 to 829 (ESKIAIIGMS…GGNTALLVED (436 aa)). Catalysis depends on for beta-ketoacyl synthase activity residues C566, H701, and H745. The segment at 929-1233 (AFVFSGQGSQ…PSLMRNKDGW (305 aa)) is malonyl-CoA:ACP transacylase (MAT) domain. The For acyl/malonyl transferase activity role is filled by S1018. The tract at residues 1310–1624 (TASVHRIVHE…RKVLNTAMPP (315 aa)) is product template (PT) domain. The interval 1314-1447 (HRIVHESVDK…SSLHFERPKV (134 aa)) is N-terminal hotdog fold. Residues 1314–1619 (HRIVHESVDK…FQGIPRKVLN (306 aa)) form the PKS/mFAS DH domain. The Proton acceptor; for dehydratase activity role is filled by H1346. The tract at residues 1474-1619 (LNSRMSSGVI…FQGIPRKVLN (146 aa)) is C-terminal hotdog fold. D1533 (proton donor; for dehydratase activity) is an active-site residue. Residues 1619-1657 (NTAMPPPKSQNEAPVRSAPAKPAAKPPKSASSEHSGHFA) are disordered. Residues 1635–1650 (SAPAKPAAKPPKSASS) are compositionally biased toward low complexity. The Carrier 1 domain occupies 1678-1752 (RNPMLAVFKI…DLATHLGLDT (75 aa)). Position 1712 is an O-(pantetheine 4'-phosphoryl)serine (S1712). The segment covering 1755–1790 (SDQSSGQSSSSGGLSPRSDSIGEITSSATTPPSLSP) has biased composition (low complexity). The tract at residues 1755–1796 (SDQSSGQSSSSGGLSPRSDSIGEITSSATTPPSLSPRGSVSG) is disordered. The Carrier 2 domain occupies 1793-1870 (SVSGSQCKDV…SFKHMFQQGH (78 aa)). An O-(pantetheine 4'-phosphoryl)serine modification is found at S1830. The interval 1882 to 2147 (LKQYRATSTL…ERVAAFIRST (266 aa)) is thioesterase (TE) domain. Residue S1973 is the For thioesterase activity of the active site.

Its function is as follows. Polyketide synthase; part of the Pks1 gene cluster that mediates the biosynthesis of an anthraquinone derivative pigment that contributes to conidial pigmentation that provides protection from UV radiation, heat and cold stress. The polyketide synthase Pks1 produces 1-acetyl-2,4,6,8-tetrahydroxy-9,10-anthraquinone though condensation of acetyl-CoA with malonyl-CoA. The dehydratase EthD and the laccase Mlac1 further convert the anthraquinone derivative into the final conidial pigment. This is Polyketide synthase 1 from Metarhizium majus (strain ARSEF 297).